We begin with the raw amino-acid sequence, 342 residues long: UHRF1-like protein (342 aa).

Residues 41–149 (SEATTLATPS…SHPGSEEEDI (109 aa)) are disordered. Polar residues predominate over residues 42 to 59 (EATTLATPSNLKTAGNQR). Over residues 74–90 (NRSDSPRKRPTKDREDL) the composition is skewed to basic and acidic residues. Over residues 115-141 (TREQVTFNSDRDTPNTPSRQIKSTHSH) the composition is skewed to polar residues. The YDG domain maps to 168 to 322 (GHIPGIGVGK…LMVCRYAFKR (155 aa)). Aspartate 218 is a DNA binding site. Positions 236–257 (KGTKQNPKNLRTAPQTSHQSFD) are disordered. The span at 238 to 257 (TKQNPKNLRTAPQTSHQSFD) shows a compositional bias: polar residues.

The protein resides in the nucleus. Involved in the maintenance of DNA methylation. Binds hemimethylated DNA. This Cryptococcus neoformans var. grubii serotype A (strain H99 / ATCC 208821 / CBS 10515 / FGSC 9487) (Filobasidiella neoformans var. grubii) protein is UHRF1-like protein.